The following is a 177-amino-acid chain: Coatomer subunit zeta-1 (177 aa).

The protein belongs to the adaptor complexes small subunit family. As to quaternary structure, oligomeric complex that consists of at least the alpha, beta, beta', gamma, delta, epsilon and zeta subunits.

Its subcellular location is the cytoplasm. It localises to the golgi apparatus membrane. The protein resides in the cytoplasmic vesicle. It is found in the COPI-coated vesicle membrane. Its function is as follows. The coatomer is a cytosolic protein complex that binds to dilysine motifs and reversibly associates with Golgi non-clathrin-coated vesicles, which further mediate biosynthetic protein transport from the ER, via the Golgi up to the trans Golgi network. Coatomer complex is required for budding from Golgi membranes, and is essential for the retrograde Golgi-to-ER transport of dilysine-tagged proteins. The zeta subunit may be involved in regulating the coat assembly and, hence, the rate of biosynthetic protein transport due to its association-dissociation properties with the coatomer complex. This Oryza sativa subsp. japonica (Rice) protein is Coatomer subunit zeta-1 (COPZ1).